The primary structure comprises 65 residues: Ferredoxin-1 (65 aa).

The 29-residue stretch at 3–31 (RKFYVDQDECIACESCVEIAPGAFAMDPE) folds into the 4Fe-4S ferredoxin-type domain. [4Fe-4S] cluster contacts are provided by Cys-12, Cys-15, Cys-18, and Cys-55.

Homodimer. [4Fe-4S] cluster serves as cofactor.

Functionally, ferredoxins are iron-sulfur proteins that transfer electrons in a wide variety of metabolic reactions. The chain is Ferredoxin-1 (fd1) from Desulfocurvibacter africanus (Desulfovibrio africanus).